Here is a 136-residue protein sequence, read N- to C-terminus: Peptide methionine sulfoxide reductase MsrB (136 aa).

One can recognise a MsrB domain in the interval 7 to 129 (SSSHENTLTE…NSASLSFTDD (123 aa)). Zn(2+) is bound by residues Cys-46, Cys-49, Cys-95, and Cys-98. Catalysis depends on Cys-118, which acts as the Nucleophile.

It belongs to the MsrB Met sulfoxide reductase family. Zn(2+) serves as cofactor.

It carries out the reaction L-methionyl-[protein] + [thioredoxin]-disulfide + H2O = L-methionyl-(R)-S-oxide-[protein] + [thioredoxin]-dithiol. This Erwinia tasmaniensis (strain DSM 17950 / CFBP 7177 / CIP 109463 / NCPPB 4357 / Et1/99) protein is Peptide methionine sulfoxide reductase MsrB.